A 692-amino-acid chain; its full sequence is Phenoloxidase subunit 2 (692 aa).

A propeptide spanning residues 1–97 is cleaved from the precursor; the sequence is MTDRVKSLQL…PRHQEMATEV (97 aa). 3 residues coordinate Cu cation: histidine 213, histidine 217, and histidine 243. N-linked (GlcNAc...) asparagine glycosylation is found at asparagine 256, asparagine 295, and asparagine 309. Glutamate 351 acts as the Proton acceptor in catalysis. Residues histidine 366, histidine 370, and histidine 406 each coordinate Cu cation. Asparagine 494 is a glycosylation site (N-linked (GlcNAc...) asparagine). 2 disulfides stabilise this stretch: cysteine 583/cysteine 628 and cysteine 585/cysteine 635.

The protein belongs to the tyrosinase family. In terms of assembly, heterodimer. The cofactor is Cu(2+).

The protein localises to the secreted. It carries out the reaction L-tyrosine + O2 = L-dopaquinone + H2O. The enzyme catalyses 2 L-dopa + O2 = 2 L-dopaquinone + 2 H2O. Copper-containing oxidase that functions in the formation of pigments such as melanins and other polyphenolic compounds. Catalyzes the rate-limiting conversions of tyrosine to DOPA, DOPA to DOPA-quinone and possibly 5,6 dihydroxyindole to indole-5'6 quinone. Binds to the surface of hemocytes and is involved in hemocyte melanization. Binds the A.niger cell wall component alpha-1,3-glucan, a fungal pathogen-associated molecular pattern (PAMP) that activates the host immune response. This chain is Phenoloxidase subunit 2, found in Galleria mellonella (Greater wax moth).